The chain runs to 478 residues: Shikimate biosynthesis protein AroDE (478 aa).

Residues 1-208 (MLCTIIRGPS…LNHHYFYNFT (208 aa)) form a 3-dehydroquinate dehydratase region. 3-dehydroquinate is bound by residues S21, 29 to 31 (EMR), and 55 to 57 (TWK). The active-site Proton donor/acceptor; for 3-dehydroquinate dehydratase activity is the H110. The Schiff-base intermediate with substrate; for 3-dehydroquinate dehydratase activity role is filled by K133. Residues R171 and Q196 each coordinate 3-dehydroquinate. The interval 209 to 478 (NLSPQSQICA…VLASLFSIAA (270 aa)) is shikimate 5-dehydrogenase. 226–228 (SIG) contributes to the shikimate binding site. K277 functions as the Proton acceptor; for shikimate dehydrogenase activity in the catalytic mechanism. The shikimate site is built by N298 and D313. NADP(+) is bound by residues 337 to 341 (GAGGA), 360 to 362 (NRT), and G435. Q442 is a shikimate binding site.

The protein in the N-terminal section; belongs to the type-I 3-dehydroquinase family. This sequence in the C-terminal section; belongs to the shikimate dehydrogenase family.

It catalyses the reaction 3-dehydroquinate = 3-dehydroshikimate + H2O. The enzyme catalyses shikimate + NADP(+) = 3-dehydroshikimate + NADPH + H(+). The protein operates within metabolic intermediate biosynthesis; chorismate biosynthesis; chorismate from D-erythrose 4-phosphate and phosphoenolpyruvate: step 3/7. It participates in metabolic intermediate biosynthesis; chorismate biosynthesis; chorismate from D-erythrose 4-phosphate and phosphoenolpyruvate: step 4/7. Bifunctional enzyme that catalyzes two sequential steps of the aromatic amino acids biosynthetic pathway. In the first reaction, the AroD domain catalyzes the cis-dehydration of 3-dehydroquinate (DHQ) and introduces the first double bond of the aromatic ring to yield 3-dehydroshikimate; in the second reaction, the AroE domain catalyzes the reversible NADPH linked reduction of 3-dehydroshikimate (DHSA) to yield shikimate (SA). The chain is Shikimate biosynthesis protein AroDE from Chlamydia muridarum (strain MoPn / Nigg).